Reading from the N-terminus, the 564-residue chain is MTLLITGDSIVSAEAVWDHATMANRELAFKAGDVIKVLDASNKDWWWGQIDDEEGWFPASFVRLWVNQEDEVEEGPSDVQNGHLDPNSDCLCLGRPLQNRDQMRANVINEIMSTERHYIKHLKDICEGYLKQCRKRRDMFSDEQLKVIFGNIEDIYRFQMGFVRDLEKQYNNDDPHLSEIGPCFLEHQDGFWIYSEYCNNHLDACMELSKLMKDSRYQHFFEACRLLQQMIDIAIDGFLLTPVQKICKYPLQLAELLKYTAQDHSDYRYVAAALAVMRNVTQQINERKRRLENIDKIAQWQASVLDWEGEDILDRSSELIYTGEMAWIYQPYGRNQQRVFFLFDHQMVLCKKDLIRRDILYYKGRIDMDKYEVVDIEDGRDDDFNVSMKNAFKLHNKETEEIHLFFAKKLEEKIRWLRAFREERKMVQEDEKIGFEISENQKRQAAMTVRKVPKQKGVNSARSVPPSYPPPQDPLNHGQYLVPDGIAQSQVFEFTEPKRSQSPFWQNFSRYCEGIKKPNRSKRVSDYDDAGVDFCSGNILHSGCFFYHWGFPCCSTAGSLQFCI.

One can recognise an SH3 domain in the interval 8-67 (DSIVSAEAVWDHATMANRELAFKAGDVIKVLDASNKDWWWGQIDDEEGWFPASFVRLWVN). The interaction with GPHN stretch occupies residues 100-110 (RDQMRANVINE). Residues 103 to 287 (MRANVINEIM…RNVTQQINER (185 aa)) enclose the DH domain. The region spanning 318 to 425 (ELIYTGEMAW…WLRAFREERK (108 aa)) is the PH domain. The interval 451–470 (KVPKQKGVNSARSVPPSYPP) is disordered. Ser502 is subject to Phosphoserine.

As to quaternary structure, interacts with GPHN.

The protein localises to the cytoplasm. Its subcellular location is the postsynaptic density. In terms of biological role, acts as a guanine nucleotide exchange factor (GEF) for CDC42. Promotes formation of GPHN clusters. This Pongo abelii (Sumatran orangutan) protein is Rho guanine nucleotide exchange factor 9 (ARHGEF9).